The following is a 688-amino-acid chain: NADH-ubiquinone oxidoreductase 75 kDa subunit (688 aa).

In terms of domain architecture, 2Fe-2S ferredoxin-type spans 1–85; that stretch reads MIIRFKINEI…DESIETEIDE (85 aa). C38, C49, C52, and C66 together coordinate [2Fe-2S] cluster. The 4Fe-4S His(Cys)3-ligated-type domain maps to 85–124; it reads EILKAREGVMEFLLINHPLDCPICDQGGECDLQEQTLAYG. [4Fe-4S] cluster-binding residues include H101, C105, C108, C114, C153, C156, C159, and C204. The 57-residue stretch at 223 to 279 folds into the 4Fe-4S Mo/W bis-MGD-type domain; it reads LKNIKGIDIFDTLLTPINYQVKGGEIFRILPRINDRINEEWITDKVRFHYESYKIIE.

The protein belongs to the complex I 75 kDa subunit family. As to quaternary structure, complex I is composed of about 45 different subunits. It depends on [2Fe-2S] cluster as a cofactor. Requires [4Fe-4S] cluster as cofactor.

The protein localises to the mitochondrion inner membrane. The catalysed reaction is a ubiquinone + NADH + 5 H(+)(in) = a ubiquinol + NAD(+) + 4 H(+)(out). Its function is as follows. Core subunit of the mitochondrial membrane respiratory chain NADH dehydrogenase (Complex I) that is believed to belong to the minimal assembly required for catalysis. Complex I functions in the transfer of electrons from NADH to the respiratory chain. The immediate electron acceptor for the enzyme is believed to be ubiquinone. This is the largest subunit of complex I and it is a component of the iron-sulfur (IP) fragment of the enzyme. It may form part of the active site crevice where NADH is oxidized. The sequence is that of NADH-ubiquinone oxidoreductase 75 kDa subunit (nad11) from Dictyostelium discoideum (Social amoeba).